The sequence spans 419 residues: 3-isopropylmalate dehydratase large subunit (419 aa).

Cys300, Cys360, and Cys363 together coordinate [4Fe-4S] cluster.

Belongs to the aconitase/IPM isomerase family. LeuC type 2 subfamily. As to quaternary structure, heterodimer of LeuC and LeuD. [4Fe-4S] cluster serves as cofactor.

It catalyses the reaction (2R,3S)-3-isopropylmalate = (2S)-2-isopropylmalate. Its pathway is amino-acid biosynthesis; L-leucine biosynthesis; L-leucine from 3-methyl-2-oxobutanoate: step 2/4. In terms of biological role, catalyzes the isomerization between 2-isopropylmalate and 3-isopropylmalate, via the formation of 2-isopropylmaleate. The chain is 3-isopropylmalate dehydratase large subunit from Nitratidesulfovibrio vulgaris (strain ATCC 29579 / DSM 644 / CCUG 34227 / NCIMB 8303 / VKM B-1760 / Hildenborough) (Desulfovibrio vulgaris).